Here is a 428-residue protein sequence, read N- to C-terminus: Metal tolerance protein 10 (428 aa).

At 1-140 (MPLNSYIFFL…EMKKLAKSER (140 aa)) the chain is on the cytoplasmic side. A helical membrane pass occupies residues 141–161 (LAVHISNATNLVLFVAKVYAS). At 162 to 167 (MESRSM) the chain is on the vacuolar side. The chain crosses the membrane as a helical span at residues 168–188 (AVIASTLDSLLDLLSGFILWF). Residues 189 to 209 (TANAMRKPNQFHYPIGKRRMQ) are Cytoplasmic-facing. The helical transmembrane segment at 210–230 (PVGIIVFASVMATLGLQVLLE) threads the bilayer. The Vacuolar segment spans residues 231-248 (SGRQLVAKSGIHMNSTEE). Residues 249–269 (KWMIGIMVSVTIVKFLLMLYC) traverse the membrane as a helical segment. The Cytoplasmic segment spans residues 270-287 (RGFQNEIVRAYAQDHLFD). The helical transmembrane segment at 288–308 (VVTNSIGLATAVLAVKFYWWI) threads the bilayer. At 309-311 (DPT) the chain is on the vacuolar side. A helical transmembrane segment spans residues 312 to 332 (GAILIALYTIATWARTVLENV). Residues 333–428 (HSLIGRSAPP…FTHRPEHKCN (96 aa)) lie on the Cytoplasmic side of the membrane.

This sequence belongs to the cation diffusion facilitator (CDF) transporter (TC 2.A.4) family. SLC30A subfamily.

The protein resides in the vacuole membrane. Functionally, involved in sequestration of excess metal in the cytoplasm into vacuoles to maintain metal homeostasis. The protein is Metal tolerance protein 10 (MTP10) of Arabidopsis thaliana (Mouse-ear cress).